Reading from the N-terminus, the 1035-residue chain is MSPAALKNMEENKTTVMTTSHSSNDGGETVKGYSDAVEVRFSDFCKSGLALDENTCTQAIKLFKDTKHLLMTNVSSIGNGTSEEAERFWFAFVSYSVKRLSEKNRDDAQQKSDDPGLTLCQILRLAKLNIVDFFKELPHFIVKAGPILSNIYGADWENRLEAKELQANFVHLSILSRHYKRACRELFLTSDASSDKQPAISNEATHVSDHHRFGWLLFLALRVHAFSRFKDLVTCTNGLVSVLAVLIIHVPVRFRNFSFNDSQWFVRKGDKGVDLLASLCNKYDTSEEVLRKSMETTNNLIANILKKKPHSASEYKNENLVNINPDGLIYYEDLMEESSLQSSLNILEKDYDDAIRNKAELDERVFINEEDSLLGSGSVSAGSLNITGAKRKFDLISSPTKTITSPLSPHRSPASHANGIPGSANSKMAATPVSTAMTTAKWLRTIISPLPSKPSAQLERFLVSCDKDVTNDVIRRAQIILEAIFPSSSLGERCVNGSLQSTNLMDNIWAEQRRLEALKLYYRVLESMCTAEAQILHATNLTSLLTNERFHRCMLACSAELVVATYKTVTMLFPAVLERTGITAFDLSKVIESFIRHEESLPRELRRHLNSLEERLLDSMVWEKGSSLYNSLTVARPALSAEINRLGLLAEPMPSLDAIAMHINFSSGCLPPVPSLQKHETSPGSGQNGDLRSPKRPCTDFRSVLVERNSFTSPVKDRLLGNLKSKLPPPPLQSAFASPTRPNPGGGGETCAETGINVFFTKINKLAAVRINGMIEKLQPSQQHIRENVYRLFQLILSHQTSLFFNRHIDQIILCCFYGVAKISKLNLTFREIIYNYRRQPHCKTLVFRSVFVDWSSARHNGRTGQDHVDIITFYNEIFIPAAKPLLVDVGSAGTTVKASNVPEVGNNKDGQCPASPKVSPFPSLPDMSPKKVSSAHNVYVSPLRSSKMDALISNSSKSYYACVGESTHAYQSPSKDLNAINNRLNGNRKARGTLNLDNDVGLVSDSMVANSLGLQNGNCASTSGAALKSEQSDS.

Residues 403-426 form a disordered region; the sequence is ITSPLSPHRSPASHANGIPGSANS. A domain A region spans residues 431-632; that stretch reads TPVSTAMTTA…EKGSSLYNSL (202 aa). Residues 431-885 are pocket; it reads TPVSTAMTTA…NEIFIPAAKP (455 aa). Residues 633–753 are spacer; the sequence is TVARPALSAE…PGGGGETCAE (121 aa). Disordered regions lie at residues 674-697 and 721-748; these read PSLQ…PKRP and GNLK…GGGG. The domain B stretch occupies residues 754-885; it reads TGINVFFTKI…NEIFIPAAKP (132 aa).

The protein belongs to the retinoblastoma protein (RB) family.

The protein localises to the nucleus. Its function is as follows. Regulator of biological processes that recruits a histone deacetylase to control gene transcription. May play a role in the entry into mitosis, negatively regulating the cell proliferation. Formation of stable complexes with geminiviridae replication-associated proteins may create a cellular environment which favors viral DNA replication. In Populus trichocarpa (Western balsam poplar), this protein is Retinoblastoma-related protein (RBL901).